A 381-amino-acid polypeptide reads, in one-letter code: Chaperone protein DnaJ (381 aa).

A J domain is found at 3-66; the sequence is DYYETLGVER…DKRRMYDSGV (64 aa). A CR-type zinc finger spans residues 129-211; the sequence is GGTAHVKINT…CMGHGRVRTT (83 aa). Positions 142, 145, 159, 162, 185, 188, 199, and 202 each coordinate Zn(2+). CXXCXGXG motif repeat units follow at residues 142–149, 159–166, 185–192, and 199–206; these read CQECGGSG, CPDCHGQG, CERCEGHG, and CPSCMGHG. Residues 355–381 are disordered; that stretch reads ATHVSQASRPQAGQKKGFFSKLKDALS. Over residues 356–365 the composition is skewed to polar residues; it reads THVSQASRPQ.

This sequence belongs to the DnaJ family. Homodimer. Zn(2+) serves as cofactor.

Its subcellular location is the cytoplasm. In terms of biological role, participates actively in the response to hyperosmotic and heat shock by preventing the aggregation of stress-denatured proteins and by disaggregating proteins, also in an autonomous, DnaK-independent fashion. Unfolded proteins bind initially to DnaJ; upon interaction with the DnaJ-bound protein, DnaK hydrolyzes its bound ATP, resulting in the formation of a stable complex. GrpE releases ADP from DnaK; ATP binding to DnaK triggers the release of the substrate protein, thus completing the reaction cycle. Several rounds of ATP-dependent interactions between DnaJ, DnaK and GrpE are required for fully efficient folding. Also involved, together with DnaK and GrpE, in the DNA replication of plasmids through activation of initiation proteins. This chain is Chaperone protein DnaJ, found in Bifidobacterium longum (strain NCC 2705).